Here is a 343-residue protein sequence, read N- to C-terminus: CCN family member 3 (343 aa).

Residues 1 to 18 (MTPHLALCFILLIQQVAS) form the signal peptide. Residues 19–90 (QKCPSQCDQC…RMETGTCMAL (72 aa)) enclose the IGFBP N-terminal domain. Cystine bridges form between Cys21/Cys46, Cys25/Cys48, Cys28/Cys49, Cys35/Cys52, Cys60/Cys74, and Cys66/Cys87. Residues 93-159 (NSCVFDGVVY…GECCEKWVCD (67 aa)) form the VWFC domain. Positions 190 to 235 (ACIAQTTEWSACSKTCGMGVSSRVTNRNARCEMQKQIRLCMVRSCE) constitute a TSP type-1 domain. Cystine bridges form between Cys249-Cys286, Cys266-Cys300, Cys277-Cys316, Cys280-Cys318, and Cys285-Cys322. One can recognise a CTCK domain in the interval 249–323 (CVRVRKTTKP…STCVCHYNCP (75 aa)). A glycan (N-linked (GlcNAc...) asparagine) is linked at Asn265.

Belongs to the CCN family.

It localises to the secreted. Its subcellular location is the cytoplasm. It is found in the cell junction. The protein resides in the gap junction. In terms of biological role, immediate-early protein playing a role in various cellular processes including proliferation, adhesion, migration, differentiation and survival. Acts by binding to integrins or membrane receptors such as NOTCH1. The sequence is that of CCN family member 3 (ccn3) from Xenopus laevis (African clawed frog).